The sequence spans 339 residues: Ketol-acid reductoisomerase (NADP(+)) (339 aa).

One can recognise a KARI N-terminal Rossmann domain in the interval 1–182 (MRVYYDRDAD…GGGRAGIIET (182 aa)). NADP(+) contacts are provided by residues 24-27 (YGSQ), R48, S51, and 83-86 (DEGQ). H108 is a catalytic residue. G134 contacts NADP(+). One can recognise a KARI C-terminal knotted domain in the interval 183–328 (TFKEEVETDL…EKLRAMMPWI (146 aa)). Mg(2+) is bound by residues D191, E195, E227, and E231. S252 is a substrate binding site.

This sequence belongs to the ketol-acid reductoisomerase family. Mg(2+) is required as a cofactor.

It carries out the reaction (2R)-2,3-dihydroxy-3-methylbutanoate + NADP(+) = (2S)-2-acetolactate + NADPH + H(+). It catalyses the reaction (2R,3R)-2,3-dihydroxy-3-methylpentanoate + NADP(+) = (S)-2-ethyl-2-hydroxy-3-oxobutanoate + NADPH + H(+). Its pathway is amino-acid biosynthesis; L-isoleucine biosynthesis; L-isoleucine from 2-oxobutanoate: step 2/4. It participates in amino-acid biosynthesis; L-valine biosynthesis; L-valine from pyruvate: step 2/4. Functionally, involved in the biosynthesis of branched-chain amino acids (BCAA). Catalyzes an alkyl-migration followed by a ketol-acid reduction of (S)-2-acetolactate (S2AL) to yield (R)-2,3-dihydroxy-isovalerate. In the isomerase reaction, S2AL is rearranged via a Mg-dependent methyl migration to produce 3-hydroxy-3-methyl-2-ketobutyrate (HMKB). In the reductase reaction, this 2-ketoacid undergoes a metal-dependent reduction by NADPH to yield (R)-2,3-dihydroxy-isovalerate. The protein is Ketol-acid reductoisomerase (NADP(+)) of Gluconobacter oxydans (strain 621H) (Gluconobacter suboxydans).